The chain runs to 162 residues: FCS-Like Zinc finger 6 (162 aa).

Disordered stretches follow at residues 25-47 (NLPS…YGSN) and 121-162 (RQEQ…AAAV). Residues 27–47 (PSESEPSNQQKPTVASPYGSN) show a composition bias toward polar residues. Residues 88 to 132 (HFLRSCALCERLLVPGRDIYMYRGDKAFCSSECRQEQMAQDERKE) form an FLZ-type zinc finger. Positions 147 to 162 (APARAKPGKGRAAAAV) are enriched in low complexity.

The protein belongs to the FLZ family. Interacts with KIN10 and KIN11 via its FLZ-type zinc finger domain. Early expressed in hypocotyl and cotyledon. Later expressed in old or senescing leaves and in pistil, pollen and filament of open flowers.

It localises to the nucleus. It is found in the cytoplasm. The protein localises to the endoplasmic reticulum. Its function is as follows. May act as an adapter to facilitate the interaction of SnRK1 complex with effector proteins, conferring tissue- and stimulus-type specific differences in the SnRK1 regulation pathway. Negatively regulates KIN10 leading to a repression of the SnRK1 signaling pathway. In Arabidopsis thaliana (Mouse-ear cress), this protein is FCS-Like Zinc finger 6.